A 509-amino-acid chain; its full sequence is uncharacterized protein (509 aa).

Disordered stretches follow at residues 112 to 131 (KSKQ…SENE), 152 to 325 (NKNT…NNDS), 365 to 457 (NNIN…PNQG), and 488 to 509 (AQQP…VQQQ). Low complexity-rich tracts occupy residues 116–127 (NNNGFNGHKGNF) and 153–184 (KNTI…SNTT). Over residues 189–217 (YSDDDYQNEQNEFEEEDYDSNDDENDSHD) the composition is skewed to acidic residues. Positions 228-242 (KTTNQLKRKVSSSFT) are enriched in polar residues. Low complexity-rich tracts occupy residues 243–325 (NNNY…NNDS) and 365–397 (NNIN…TNND). The segment covering 398–422 (LKSSNHSNYDFNYNTNERLSHSPIQ) has biased composition (polar residues). Over residues 423-442 (THSSSNNSTPSNQSPTFPSN) the composition is skewed to low complexity. 2 stretches are compositionally biased toward polar residues: residues 443–457 (YISQ…PNQG) and 496–509 (NNNV…VQQQ).

This is an uncharacterized protein from Dictyostelium discoideum (Social amoeba).